The following is a 360-amino-acid chain: Phospho-N-acetylmuramoyl-pentapeptide-transferase (360 aa).

10 consecutive transmembrane segments (helical) span residues 27–47, 70–90, 98–118, 134–154, 168–188, 199–219, 239–259, 263–283, 288–308, and 337–357; these read GALF…ISLL, GTPT…ILLW, VWVT…DDYL, LLLE…YSPA, TLLN…VGAG, GLAI…AYLV, LAVV…FNAP, IFMG…IAVA, IVLA…IIQV, and QVVI…LATL.

The protein belongs to the glycosyltransferase 4 family. MraY subfamily. Mg(2+) serves as cofactor.

It is found in the cell inner membrane. The catalysed reaction is UDP-N-acetyl-alpha-D-muramoyl-L-alanyl-gamma-D-glutamyl-meso-2,6-diaminopimeloyl-D-alanyl-D-alanine + di-trans,octa-cis-undecaprenyl phosphate = di-trans,octa-cis-undecaprenyl diphospho-N-acetyl-alpha-D-muramoyl-L-alanyl-D-glutamyl-meso-2,6-diaminopimeloyl-D-alanyl-D-alanine + UMP. It participates in cell wall biogenesis; peptidoglycan biosynthesis. Functionally, catalyzes the initial step of the lipid cycle reactions in the biosynthesis of the cell wall peptidoglycan: transfers peptidoglycan precursor phospho-MurNAc-pentapeptide from UDP-MurNAc-pentapeptide onto the lipid carrier undecaprenyl phosphate, yielding undecaprenyl-pyrophosphoryl-MurNAc-pentapeptide, known as lipid I. The protein is Phospho-N-acetylmuramoyl-pentapeptide-transferase of Methylorubrum extorquens (strain CM4 / NCIMB 13688) (Methylobacterium extorquens).